The sequence spans 440 residues: Phosphatidylcholine-sterol acyltransferase (440 aa).

Positions M1–P24 are cleaved as a signal peptide. N-linked (GlcNAc...) (complex) asparagine glycosylation occurs at N44. C74 and C98 form a disulfide bridge. Residue N108 is glycosylated (N-linked (GlcNAc...) (complex) asparagine). S205 functions as the Nucleophile in the catalytic mechanism. Residue N296 is glycosylated (N-linked (GlcNAc...) (complex) asparagine). A disulfide bridge connects residues C337 and C380. Active-site charge relay system residues include D369 and H401. The N-linked (GlcNAc...) (complex) asparagine glycan is linked to N408. O-linked (GalNAc...) threonine glycosylation is present at T431. S433 carries O-linked (GalNAc...) serine glycosylation.

Belongs to the AB hydrolase superfamily. Lipase family. In terms of processing, O- and N-glycosylated. O-glycosylation on Thr-431 and Ser-433 consists of sialylated galactose beta 1--&gt;3N-acetylgalactosamine structures. N-glycosylated sites contain sialylated triantennary and/or biantennary complex structures. As to expression, detected in blood plasma. Detected in cerebral spinal fluid (at protein level). Detected in liver. Expressed mainly in brain, liver and testes.

Its subcellular location is the secreted. The catalysed reaction is a sterol + a 1,2-diacyl-sn-glycero-3-phosphocholine = a sterol ester + a 1-acyl-sn-glycero-3-phosphocholine. The enzyme catalyses a 1-O-alkyl-2-acetyl-sn-glycero-3-phosphocholine + H2O = a 1-O-alkyl-sn-glycero-3-phosphocholine + acetate + H(+). It carries out the reaction a 1-hexadecanoyl-2-acyl-sn-glycero-3-phosphocholine + (24S)-hydroxycholesterol = (24S)-24-hydroxycholesterol ester + 1-hexadecanoyl-sn-glycero-3-phosphocholine. It catalyses the reaction (24S)-hydroxycholesterol + 1-hexadecanoyl-2-(9Z,12Z-octadecadienoyl)-sn-glycero-3-phosphocholine = (24S)-hydroxycholesterol 3-linoleoate + 1-hexadecanoyl-sn-glycero-3-phosphocholine. The catalysed reaction is 1-hexadecanoyl-2-(5Z,8Z,11Z,14Z-eicosatetraenoyl)-sn-glycero-3-phosphocholine + cholesterol = cholesteryl (5Z,8Z,11Z,14Z)-eicosatetraenoate + 1-hexadecanoyl-sn-glycero-3-phosphocholine. The enzyme catalyses 1-hexadecanoyl-2-(9Z-octadecenoyl)-sn-glycero-3-phosphocholine + cholesterol = cholesteryl (9Z-octadecenoate) + 1-hexadecanoyl-sn-glycero-3-phosphocholine. It carries out the reaction 1-hexadecanoyl-2-(8Z,11Z,14Z-eicosatrienoyl)-sn-glycero-3-phosphocholine + cholesterol = cholesteryl (8Z,11Z,14Z)-eicosatrienoate + 1-hexadecanoyl-sn-glycero-3-phosphocholine. It catalyses the reaction 1-hexadecanoyl-2-(5Z,8Z,11Z-eicosatrienoyl)-sn-glycero-3-phosphocholine + cholesterol = cholesteryl (5Z,8Z,11Z)-eicosatrienoate + 1-hexadecanoyl-sn-glycero-3-phosphocholine. The catalysed reaction is 1-hexadecanoyl-2-(5Z,8Z,11Z,14Z,17Z-eicosapentaenoyl)-sn-glycero-3-phosphocholine + cholesterol = (5Z,8Z,11Z,14Z,17Z-eicosapentaenoyl)-cholesterol + 1-hexadecanoyl-sn-glycero-3-phosphocholine. The enzyme catalyses 1-hexadecanoyl-2-(9Z,12Z-octadecadienoyl)-sn-glycero-3-phosphocholine + cholesterol = cholesteryl (9Z,12Z)-octadecadienoate + 1-hexadecanoyl-sn-glycero-3-phosphocholine. It carries out the reaction 1-hexadecanoyl-2-(6Z,9Z,12Z-octadecatrienoyl)-sn-glycero-3-phosphocholine + cholesterol = (6Z,9Z,12Z-octadecatrienoyl)-cholesterol + 1-hexadecanoyl-sn-glycero-3-phosphocholine. It catalyses the reaction 1-hexadecanoyl-2-(11Z,14Z,17Z-eicosatrienoyl)-sn-glycero-3-phosphocholine + cholesterol = (11Z,14Z,17Z-eicosatrienoyl)-cholesterol + 1-hexadecanoyl-sn-glycero-3-phosphocholine. The catalysed reaction is 1-hexadecanoyl-2-(9Z,12Z,15Z-octadecatrienoyl)-sn-glycero-3-phosphocholine + cholesterol = (9Z,12Z,15Z-octadecatrienoyl)-cholesterol + 1-hexadecanoyl-sn-glycero-3-phosphocholine. The enzyme catalyses 1-hexadecanoyl-2-(9Z,12Z-octadecadienoyl)-sn-glycero-3-phosphocholine + H2O = (9Z,12Z)-octadecadienoate + 1-hexadecanoyl-sn-glycero-3-phosphocholine + H(+). It carries out the reaction 1-hexadecanoyl-2-(5Z,8Z,11Z,14Z-eicosatetraenoyl)-sn-glycero-3-phosphocholine + H2O = 1-hexadecanoyl-sn-glycero-3-phosphocholine + (5Z,8Z,11Z,14Z)-eicosatetraenoate + H(+). It catalyses the reaction a 1-O-alkyl-2-acetyl-sn-glycero-3-phosphocholine + 1-hexadecanoyl-sn-glycero-3-phosphocholine = 1-hexadecanoyl-2-acetyl-sn-glycero-3-phosphocholine + a 1-O-alkyl-sn-glycero-3-phosphocholine. With respect to regulation, APOA1 is the most potent activator in plasma. Also activated by APOE, APOC1 and APOA4. Inhibited by haptoglobin and 5,5'-dithiobis-(2-nitrobenzoic acid) (DTNB). Functionally, central enzyme in the extracellular metabolism of plasma lipoproteins. Synthesized mainly in the liver and secreted into plasma where it converts cholesterol and phosphatidylcholines (lecithins) to cholesteryl esters and lysophosphatidylcholines on the surface of high and low density lipoproteins (HDLs and LDLs). The cholesterol ester is then transported back to the liver. Has a preference for plasma 16:0-18:2 or 18:O-18:2 phosphatidylcholines. Also produced in the brain by primary astrocytes, and esterifies free cholesterol on nascent APOE-containing lipoproteins secreted from glia and influences cerebral spinal fluid (CSF) APOE- and APOA1 levels. Together with APOE and the cholesterol transporter ABCA1, plays a key role in the maturation of glial-derived, nascent lipoproteins. Required for remodeling high-density lipoprotein particles into their spherical forms. Catalyzes the hydrolysis of 1-O-alkyl-2-acetyl-sn-glycero-3-phosphocholine (platelet-activating factor or PAF) to 1-O-alkyl-sn-glycero-3-phosphocholine (lyso-PAF). Also catalyzes the transfer of the acetate group from PAF to 1-hexadecanoyl-sn-glycero-3-phosphocholine forming lyso-PAF. Catalyzes the esterification of (24S)-hydroxycholesterol (24(S)OH-C), also known as cerebrosterol to produce 24(S)OH-C monoesters. The protein is Phosphatidylcholine-sterol acyltransferase (LCAT) of Homo sapiens (Human).